A 585-amino-acid chain; its full sequence is Efflux pump dotC (585 aa).

The segment covering 1–34 (MSEDHTKADNLSEKDPHSPERSDSSSHEDAHARE) has biased composition (basic and acidic residues). The disordered stretch occupies residues 1–45 (MSEDHTKADNLSEKDPHSPERSDSSSHEDAHAREEEESSDDDGAL). The N-linked (GlcNAc...) asparagine glycan is linked to asparagine 10. Acidic residues predominate over residues 35–44 (EEESSDDDGA). The helical transmembrane segment at 51–71 (SLIAIVMIALSLIGLQLAVFL) threads the bilayer. An N-linked (GlcNAc...) asparagine glycan is attached at asparagine 91. 13 consecutive transmembrane segments (helical) span residues 94–114 (AAYTWVGSAYLLANAASTPIW), 132–152 (ALFMIGSLVCALSINVGMLIT), 158–178 (GAAGGGLLTLVDTIIGDLFSL), 186–206 (GMIGGVWAIACALGPIVGGAF), 214–234 (WCFYINLPIDGLAFGIIFFFL), 247–267 (FAAIDWAGSFFIIGGTLMFLF), 280–300 (SATVICLLVFGVVCIVLFGLV), 323–343 (ALLVAFFHSFVFTSAFYYLPL), 353–373 (PILAGVYILPAVLSTGVSAAA), 385–405 (LIPMYFGMSMMILGYGLLINF), 414–434 (LIIYQLIAGIGNGPNFQAPLV), 449–471 (TATFNFVRNIATAISVVAGQVLY), and 524–544 (SPMWIMYTAFAAAGLFCILLV). The segment at 564–585 (KKAEAERKAERQAKDLEKAQKS) is disordered.

This sequence belongs to the major facilitator superfamily. TCR/Tet family.

The protein resides in the cell membrane. It localises to the vacuole membrane. Its function is as follows. Efflux pump; part of the gene cluster that mediates the biosynthesis of dothistromin (DOTH), a polyketide toxin very similar in structure to the aflatoxin precursor, versicolorin B. One function of dotC may be to transport early-stage dothistromin biosynthetic intermediates from the cytoplasm into vacuoles, thereby affecting the rate of dothistromin production. The sequence is that of Efflux pump dotC from Dothistroma septosporum (Red band needle blight fungus).